Here is a 319-residue protein sequence, read N- to C-terminus: ATP-dependent 6-phosphofructokinase (319 aa).

G11 is an ATP binding site. An ADP-binding site is contributed by 21–25 (RAVTR). ATP contacts are provided by residues 72-73 (RY) and 102-105 (GDGS). Residue D103 participates in Mg(2+) binding. 125–127 (TID) lines the substrate pocket. D127 (proton acceptor) is an active-site residue. R154 serves as a coordination point for ADP. Substrate contacts are provided by residues R162 and 169–171 (MGR). Residues 185 to 187 (GAD) and 213 to 215 (KDH) contribute to the ADP site. Residues E222, R243, and 249–252 (HMQR) contribute to the substrate site.

Belongs to the phosphofructokinase type A (PFKA) family. ATP-dependent PFK group I subfamily. Prokaryotic clade 'B1' sub-subfamily. In terms of assembly, homotetramer. The cofactor is Mg(2+).

Its subcellular location is the cytoplasm. It carries out the reaction beta-D-fructose 6-phosphate + ATP = beta-D-fructose 1,6-bisphosphate + ADP + H(+). It functions in the pathway carbohydrate degradation; glycolysis; D-glyceraldehyde 3-phosphate and glycerone phosphate from D-glucose: step 3/4. Its activity is regulated as follows. Allosterically activated by ADP and other diphosphonucleosides, and allosterically inhibited by phosphoenolpyruvate. The binding affinities for these effectors are decreased however, and therefore the allosteric effect becomes apparent only at high effector concentrations. Catalyzes the phosphorylation of D-fructose 6-phosphate to fructose 1,6-bisphosphate by ATP, the first committing step of glycolysis. The chain is ATP-dependent 6-phosphofructokinase from Lactobacillus delbrueckii subsp. bulgaricus.